Consider the following 761-residue polypeptide: Elongation factor G, mitochondrial (761 aa).

The N-terminal 42 residues, M1–R42, are a transit peptide targeting the mitochondrion. One can recognise a tr-type G domain in the interval N68 to S349. GTP-binding positions include A77–T84, D148–H152, and N202–D205.

It belongs to the TRAFAC class translation factor GTPase superfamily. Classic translation factor GTPase family. EF-G/EF-2 subfamily. Post-translationally, the precursor is processed in two steps involving mitochondrial intermediate peptidase (MIP) and mitochondrial processing peptidase (MPP).

Its subcellular location is the mitochondrion. It participates in protein biosynthesis; polypeptide chain elongation. Functionally, mitochondrial GTPase that catalyzes the GTP-dependent ribosomal translocation step during translation elongation. During this step, the ribosome changes from the pre-translocational (PRE) to the post-translocational (POST) state as the newly formed A-site-bound peptidyl-tRNA and P-site-bound deacylated tRNA move to the P and E sites, respectively. Catalyzes the coordinated movement of the two tRNA molecules, the mRNA and conformational changes in the ribosome. This chain is Elongation factor G, mitochondrial, found in Saccharomyces cerevisiae (strain YJM789) (Baker's yeast).